The chain runs to 360 residues: Pyrimidine monooxygenase RutA (360 aa).

FMN contacts are provided by residues 49 to 50 (IK), Asn115, Glu124, 140 to 141 (RY), and Ser190.

This sequence belongs to the NtaA/SnaA/DszA monooxygenase family. RutA subfamily.

It catalyses the reaction uracil + FMNH2 + NADH + O2 = (Z)-3-ureidoacrylate + FMN + NAD(+) + H2O + H(+). It carries out the reaction thymine + FMNH2 + NADH + O2 = (Z)-2-methylureidoacrylate + FMN + NAD(+) + H2O + H(+). Its function is as follows. Catalyzes the pyrimidine ring opening between N-3 and C-4 by an unusual flavin hydroperoxide-catalyzed mechanism, adding oxygen atoms in the process to yield ureidoacrylate peracid, that immediately reacts with FMN forming ureidoacrylate and FMN-N(5)-oxide. The FMN-N(5)-oxide reacts spontaneously with NADH to produce FMN. Requires the flavin reductase RutF to regenerate FMN in vivo. The protein is Pyrimidine monooxygenase RutA of Pseudomonas savastanoi pv. phaseolicola (strain 1448A / Race 6) (Pseudomonas syringae pv. phaseolicola (strain 1448A / Race 6)).